The chain runs to 485 residues: Glutamyl-tRNA(Gln) amidotransferase subunit A (485 aa).

Active-site charge relay system residues include Lys79 and Ser154. Ser178 serves as the catalytic Acyl-ester intermediate.

Belongs to the amidase family. GatA subfamily. As to quaternary structure, heterotrimer of A, B and C subunits.

The catalysed reaction is L-glutamyl-tRNA(Gln) + L-glutamine + ATP + H2O = L-glutaminyl-tRNA(Gln) + L-glutamate + ADP + phosphate + H(+). In terms of biological role, allows the formation of correctly charged Gln-tRNA(Gln) through the transamidation of misacylated Glu-tRNA(Gln) in organisms which lack glutaminyl-tRNA synthetase. The reaction takes place in the presence of glutamine and ATP through an activated gamma-phospho-Glu-tRNA(Gln). The polypeptide is Glutamyl-tRNA(Gln) amidotransferase subunit A (Staphylococcus aureus (strain MW2)).